The chain runs to 189 residues: Putative ankyrin repeat protein TV1425 (189 aa).

4 ANK repeats span residues 31–60 (YNRTPLMVACMLGMENAIDKLVENFDKLED), 64–93 (EGSTALIWAVKNNRLGIAEKLLSKGSNVNT), 97–126 (SGKTPLMWSIIFGYSEMSYFLLEHGANVND), and 130–159 (EGETPLIVASKYGRSEIVKKLLELGADISA).

The sequence is that of Putative ankyrin repeat protein TV1425 from Thermoplasma volcanium (strain ATCC 51530 / DSM 4299 / JCM 9571 / NBRC 15438 / GSS1).